The sequence spans 231 residues: Ion-translocating oxidoreductase complex subunit E (231 aa).

Helical transmembrane passes span A18 to A38, L39 to L59, T63 to V83, L86 to V106, A125 to L145, and P182 to G202.

It belongs to the NqrDE/RnfAE family. The complex is composed of six subunits: RsxA, RsxB, RsxC, RsxD, RsxE and RsxG.

It is found in the cell inner membrane. Part of a membrane-bound complex that couples electron transfer with translocation of ions across the membrane. Required to maintain the reduced state of SoxR. This is Ion-translocating oxidoreductase complex subunit E from Shigella flexneri serotype 5b (strain 8401).